The following is a 238-amino-acid chain: Complement C1q-like protein 4 (238 aa).

An N-terminal signal peptide occupies residues 1–15 (MVLLLLVAIPLLVHS). The interval 37–102 (SRGQGPDGAP…PGPGPGGAAP (66 aa)) is disordered. The Collagen-like domain maps to 53–96 (PPGAKGEVGRRGKAGLRGPPGPPGPRGPPGEPGRPGPPGPPGPG). Over residues 71–96 (PPGPPGPRGPPGEPGRPGPPGPPGPG) the composition is skewed to pro residues. A C1q domain is found at 105–238 (GYVPRIAFYA…TFSGFIIYPD (134 aa)).

In terms of assembly, forms homooligomers, predominantly dimers or trimers. Forms heterooligomers with C1QL1, C1QL2 and C1QL3, when proteins are coexpressed; this interaction does not occur after secretion. Interacts with ADGRB3. In terms of tissue distribution, highly expressed in testis and adipose tissue, brown adipose tissue expressing higher levels than subcutaneous and visceral white adipose tissue. In gonadal fat pad, expressed at lower levels in adipocytes than in the stromal vascular fraction (VSP), which contains preadipocytes, fibroblasts, endothelial cells and occasional immune cells. Expression exhibits sexually dimorphism, with higher levels in females than in males.

The protein localises to the secreted. May regulate the number of excitatory synapses that are formed on hippocampus neurons. Has no effect on inhibitory synapses. May inhibit adipocyte differentiation at an early stage of the process. This is Complement C1q-like protein 4 (C1ql4) from Mus musculus (Mouse).